We begin with the raw amino-acid sequence, 20 residues long: Cuticle-degrading protease-like protein (20 aa).

Residues 1 to 20 (AIVEQQGAPXGLGRIINKXK) are disordered.

Belongs to the peptidase S8 family.

It localises to the secreted. In terms of biological role, capable of breaching the insect cuticle. The chain is Cuticle-degrading protease-like protein from Metacordyceps chlamydosporia (Nematophagous fungus).